A 691-amino-acid polypeptide reads, in one-letter code: Elongation factor G (691 aa).

The tr-type G domain maps to 8-282 (ERVRNIGIAA…AVVDYLPAPI (275 aa)). GTP is bound by residues 17 to 24 (AHIDAGKT), 81 to 85 (DTPGH), and 135 to 138 (NKMD).

It belongs to the TRAFAC class translation factor GTPase superfamily. Classic translation factor GTPase family. EF-G/EF-2 subfamily.

It localises to the cytoplasm. In terms of biological role, catalyzes the GTP-dependent ribosomal translocation step during translation elongation. During this step, the ribosome changes from the pre-translocational (PRE) to the post-translocational (POST) state as the newly formed A-site-bound peptidyl-tRNA and P-site-bound deacylated tRNA move to the P and E sites, respectively. Catalyzes the coordinated movement of the two tRNA molecules, the mRNA and conformational changes in the ribosome. The sequence is that of Elongation factor G from Synechococcus sp. (strain CC9311).